The following is a 398-amino-acid chain: Acetate kinase (398 aa).

A Mg(2+)-binding site is contributed by Asn-7. Position 14 (Lys-14) interacts with ATP. Position 92 (Arg-92) interacts with substrate. The active-site Proton donor/acceptor is the Asp-149. Residues 209–213 (HLGNG), 284–286 (DFR), and 332–336 (GVGEN) contribute to the ATP site. Mg(2+) is bound at residue Glu-385.

Belongs to the acetokinase family. In terms of assembly, homodimer. Mg(2+) is required as a cofactor. The cofactor is Mn(2+).

It is found in the cytoplasm. The enzyme catalyses acetate + ATP = acetyl phosphate + ADP. Its pathway is metabolic intermediate biosynthesis; acetyl-CoA biosynthesis; acetyl-CoA from acetate: step 1/2. Catalyzes the formation of acetyl phosphate from acetate and ATP. Can also catalyze the reverse reaction. In Clostridioides difficile (strain 630) (Peptoclostridium difficile), this protein is Acetate kinase.